The sequence spans 52 residues: ERMES regulator 1 (52 aa).

At 1-27 (MIFFFNQIRSIFTALHTPTQQIQLSRR) the chain is on the mitochondrial intermembrane side. Residues 28 to 46 (AFFQFLGYLGSCVVISLAA) traverse the membrane as a helical segment. Residues 47–52 (QSKYVQ) are Cytoplasmic-facing.

This sequence belongs to the EMR1 family.

It localises to the mitochondrion outer membrane. In terms of biological role, mediates the formation of endoplasmic reticulum (ER)-mitochondria encounter structure (ERMES) foci, thereby contributing to the formation of ER-mitochondrial contact sites. This is ERMES regulator 1 from Saccharomyces cerevisiae (strain ATCC 204508 / S288c) (Baker's yeast).